The following is a 474-amino-acid chain: Aspartyl/glutamyl-tRNA(Asn/Gln) amidotransferase subunit B (474 aa).

It belongs to the GatB/GatE family. GatB subfamily. Heterotrimer of A, B and C subunits.

It carries out the reaction L-glutamyl-tRNA(Gln) + L-glutamine + ATP + H2O = L-glutaminyl-tRNA(Gln) + L-glutamate + ADP + phosphate + H(+). The enzyme catalyses L-aspartyl-tRNA(Asn) + L-glutamine + ATP + H2O = L-asparaginyl-tRNA(Asn) + L-glutamate + ADP + phosphate + 2 H(+). Functionally, allows the formation of correctly charged Asn-tRNA(Asn) or Gln-tRNA(Gln) through the transamidation of misacylated Asp-tRNA(Asn) or Glu-tRNA(Gln) in organisms which lack either or both of asparaginyl-tRNA or glutaminyl-tRNA synthetases. The reaction takes place in the presence of glutamine and ATP through an activated phospho-Asp-tRNA(Asn) or phospho-Glu-tRNA(Gln). This is Aspartyl/glutamyl-tRNA(Asn/Gln) amidotransferase subunit B from Coprothermobacter proteolyticus (strain ATCC 35245 / DSM 5265 / OCM 4 / BT).